The chain runs to 324 residues: tRNA U34 carboxymethyltransferase (324 aa).

Residues Lys-92, Trp-106, Lys-111, Gly-131, 181–182, Met-197, Tyr-201, and Arg-316 each bind carboxy-S-adenosyl-L-methionine; that span reads LE.

The protein belongs to the class I-like SAM-binding methyltransferase superfamily. CmoB family. As to quaternary structure, homotetramer.

It carries out the reaction carboxy-S-adenosyl-L-methionine + 5-hydroxyuridine(34) in tRNA = 5-carboxymethoxyuridine(34) in tRNA + S-adenosyl-L-homocysteine + H(+). In terms of biological role, catalyzes carboxymethyl transfer from carboxy-S-adenosyl-L-methionine (Cx-SAM) to 5-hydroxyuridine (ho5U) to form 5-carboxymethoxyuridine (cmo5U) at position 34 in tRNAs. This is tRNA U34 carboxymethyltransferase from Syntrophotalea carbinolica (strain DSM 2380 / NBRC 103641 / GraBd1) (Pelobacter carbinolicus).